The following is a 182-amino-acid chain: Heat shock protein beta-2 (182 aa).

The sHSP domain occupies 55–163 (PAGEGSRAGA…DTEVNEVYIS (109 aa)).

The protein belongs to the small heat shock protein (HSP20) family. As to quaternary structure, interacts with DMPK; may enhance its kinase activity. In terms of tissue distribution, expressed preferentially in skeletal muscle and heart but not in the lens.

Its subcellular location is the cytoplasm. The protein resides in the nucleus. Functionally, may regulate the kinase DMPK. The sequence is that of Heat shock protein beta-2 (HSPB2) from Homo sapiens (Human).